A 424-amino-acid chain; its full sequence is Nuclear hormone receptor family member nhr-55 (424 aa).

The segment covering 1–19 has biased composition (low complexity); it reads MNSPSSSSSFCSSSSSPSS. The tract at residues 1 to 20 is disordered; the sequence is MNSPSSSSSFCSSSSSPSSL. Positions 25-100 form a DNA-binding region, nuclear receptor; it reads PDTCQVCGQK…VGMTIENFQF (76 aa). 2 consecutive NR C4-type zinc fingers follow at residues 28 to 55 and 64 to 88; these read CQVC…FRRC and CRRN…LKKC. The NR LBD domain maps to 169–424; sequence EVPLHTPNAL…FSHPEVFIDL (256 aa).

Belongs to the nuclear hormone receptor family.

Its subcellular location is the nucleus. Orphan nuclear receptor. The polypeptide is Nuclear hormone receptor family member nhr-55 (nhr-55) (Caenorhabditis elegans).